Here is a 296-residue protein sequence, read N- to C-terminus: Ribonuclease MRP protein subunit POP4 (296 aa).

2 disordered regions span residues 29-74 (LLQQ…VDPK) and 148-173 (SASGSKKASQKDSKRSKSRMSMKRLK). Residues 36 to 56 (KNEKDKKGTSDVDVSMKESHQ) show a composition bias toward basic and acidic residues. A compositionally biased stretch (polar residues) spans 57–66 (ADSLPTPSKT). A Nuclear localization signal motif is present at residues 160-167 (SKRSKSRM). Residues 163 to 173 (SKSRMSMKRLK) are compositionally biased toward basic residues.

It belongs to the eukaryotic/archaeal RNase P protein component 1 family. As to quaternary structure, component of nuclear RNase MRP complexes. Several subunits of RNase P are also part of the RNase MRP complex. RNase MRP consists of a catalytic RNA moiety and several protein subunits.

The protein localises to the nucleus. In terms of biological role, component of the MRP ribonuclease complex, which cleaves pre-rRNA sequences. Required for rRNA maturation, including 5.8S rRNA processing. Seems not involved in tRNA maturation. The chain is Ribonuclease MRP protein subunit POP4 from Arabidopsis thaliana (Mouse-ear cress).